The primary structure comprises 581 residues: Arginine--tRNA ligase (581 aa).

Residues 126–136 (PNLAKEMHVGH) carry the 'HIGH' region motif.

The protein belongs to the class-I aminoacyl-tRNA synthetase family. As to quaternary structure, monomer.

The protein resides in the cytoplasm. It catalyses the reaction tRNA(Arg) + L-arginine + ATP = L-arginyl-tRNA(Arg) + AMP + diphosphate. The chain is Arginine--tRNA ligase from Shewanella halifaxensis (strain HAW-EB4).